Reading from the N-terminus, the 275-residue chain is Large ribosomal subunit protein uL2 (275 aa).

Positions 38–53 are enriched in polar residues; sequence NSKAGRNNNGRITTRH. 2 disordered regions span residues 38-59 and 224-257; these read NSKA…GGHK and AMNP…KGFR.

The protein belongs to the universal ribosomal protein uL2 family. As to quaternary structure, part of the 50S ribosomal subunit. Forms a bridge to the 30S subunit in the 70S ribosome.

In terms of biological role, one of the primary rRNA binding proteins. Required for association of the 30S and 50S subunits to form the 70S ribosome, for tRNA binding and peptide bond formation. It has been suggested to have peptidyltransferase activity; this is somewhat controversial. Makes several contacts with the 16S rRNA in the 70S ribosome. This chain is Large ribosomal subunit protein uL2, found in Burkholderia thailandensis (strain ATCC 700388 / DSM 13276 / CCUG 48851 / CIP 106301 / E264).